The following is a 315-amino-acid chain: Lamassu protein LmuA (315 aa).

In terms of biological role, component of antiviral defense system Lamassu type I, composed of LmuA and LmuB. Expression of Lamassu type I in B.subtilis (strain BEST7003) confers resistance to phages phi3T, SpBeta and SPR. In Bacillus sp. (strain NCIM 5461 / CCTCC AB 2011126 / NIO-1130), this protein is Lamassu protein LmuA.